A 509-amino-acid chain; its full sequence is Polyadenylation factor subunit 2 (509 aa).

7 WD repeats span residues 72-109, 113-151, 156-192, 196-234, 238-278, 282-321, and 350-388; these read YIHT…TLWN, FNFE…KYFE, NVKI…KVWN, STEE…KFWD, GTCI…RVFD, MKDV…NHYS, and YPTA…RFWS. Disordered stretches follow at residues 385 to 409 and 480 to 509; these read RFWS…EEQS and SNSY…QNYR. Positions 390–406 are enriched in basic and acidic residues; it reads SRPDDKESTMDRHHLGE.

It localises to the nucleus. Required for 3'-end cleavage and polyadenylation of pre-mRNAs. Also involved in chromosome segregation where it has a role in chromosome attachment to the mitotic spindle. The protein is Polyadenylation factor subunit 2 (pfs2) of Schizosaccharomyces pombe (strain 972 / ATCC 24843) (Fission yeast).